The sequence spans 139 residues: MSPPEGRVAALDLGEVWTGVAVSDPTRTLARPLEVVRTSELPGVLRRLVREEGVGEVLVGLPRTLRGEVGFQARRVSDRLSSLRAGFPEVRFVEWDERLTTKVVSGPLREGRRRGRRERVDHLAAARMLQEYLELGGGA.

The protein belongs to the YqgF nuclease family.

The protein resides in the cytoplasm. Functionally, could be a nuclease involved in processing of the 5'-end of pre-16S rRNA. The polypeptide is Putative pre-16S rRNA nuclease (Rubrobacter xylanophilus (strain DSM 9941 / JCM 11954 / NBRC 16129 / PRD-1)).